Here is a 126-residue protein sequence, read N- to C-terminus: Cornifin alpha (126 aa).

At S2 the chain carries N-acetylserine. 13 repeat units span residues 3 to 14 (SQQQKQPCTLPP), 18 to 29 (QHQVKQPCQPPP), 31 to 38 (EPCVPKTK), 39 to 46 (EPCQPKVP), 47 to 54 (EPCQPKVP), 55 to 62 (EPCQPKVP), 63 to 70 (EPCQPKVP), 71 to 78 (QPCQPKVP), 79 to 86 (EPCQPKVP), 87 to 94 (EPCQPKVP), 95 to 102 (EPCQPKVP), 103 to 110 (EPCQSKVP), and 111 to 118 (QPCQPKVP). Positions 3 to 29 (SQQQKQPCTLPPQLQQHQVKQPCQPPP) are 2 X 12 AA approximate repeats. Residues 20–43 (QVKQPCQPPPQEPCVPKTKEPCQP) are disordered. The tract at residues 31-122 (EPCVPKTKEP…CQPKVPEPCQ (92 aa)) is 11 X 8 AA approximate tandem repeats. Residues 104-126 (PCQSKVPQPCQPKVPEPCQTKQK) are disordered.

This sequence belongs to the cornifin (SPRR) family. As to expression, suprabasal layers of squamous-differentiated tissues such as epidermis, esophagus, tongue and trachea.

Its subcellular location is the cytoplasm. In terms of biological role, cross-linked envelope protein of keratinocytes. It is a keratinocyte protein that first appears in the cell cytosol, but ultimately becomes cross-linked to membrane proteins by transglutaminase. All that results in the formation of an insoluble envelope beneath the plasma membrane. The polypeptide is Cornifin alpha (Oryctolagus cuniculus (Rabbit)).